The following is a 185-amino-acid chain: Putative manganese efflux pump MntP (185 aa).

6 consecutive transmembrane segments (helical) span residues Leu-4 to Phe-24, Ile-40 to Ala-60, Leu-64 to Leu-84, Leu-108 to Met-128, Phe-134 to Ala-154, and Tyr-165 to Val-185.

Belongs to the MntP (TC 9.B.29) family.

The protein resides in the cell membrane. Probably functions as a manganese efflux pump. The chain is Putative manganese efflux pump MntP from Bacillus velezensis (strain DSM 23117 / BGSC 10A6 / LMG 26770 / FZB42) (Bacillus amyloliquefaciens subsp. plantarum).